A 787-amino-acid chain; its full sequence is Integrin beta-6 (787 aa).

The first 21 residues, 1–21 (MGIELVCLFLLLLGRNDHVQG), serve as a signal peptide directing secretion. In terms of domain architecture, PSI spans 22-71 (GCAWSGAETCSDCLLTGPHCAWCSQENFTHLSGAGERCDTPENLLAKGCQ). Topologically, residues 22-708 (GCAWSGAETC…KDCPKPPNIP (687 aa)) are extracellular. Cystine bridges form between cysteine 23-cysteine 41, cysteine 31-cysteine 454, cysteine 34-cysteine 59, cysteine 44-cysteine 70, cysteine 197-cysteine 204, cysteine 252-cysteine 293, cysteine 394-cysteine 406, cysteine 426-cysteine 452, cysteine 456-cysteine 476, cysteine 467-cysteine 479, cysteine 481-cysteine 490, cysteine 492-cysteine 519, cysteine 502-cysteine 517, cysteine 511-cysteine 522, cysteine 524-cysteine 537, cysteine 539-cysteine 560, cysteine 544-cysteine 558, cysteine 552-cysteine 563, and cysteine 565-cysteine 574. N-linked (GlcNAc...) asparagine glycosylation is found at asparagine 48 and asparagine 97. In terms of domain architecture, VWFA spans 131–371 (YPVDLYYLMD…QLIISAYEEL (241 aa)). Residues aspartate 140, serine 142, and serine 144 each coordinate Mg(2+). 4 residues coordinate Ca(2+): serine 144, aspartate 147, aspartate 148, and glutamate 179. Positions 235, 237, 239, and 240 each coordinate Ca(2+). Glutamate 240 is a binding site for Mg(2+). Asparagine 260 carries an N-linked (GlcNAc...) asparagine glycan. 2 residues coordinate Ca(2+): aspartate 271 and lysine 355. A glycan (N-linked (GlcNAc...) asparagine) is linked at asparagine 387. Asparagine 418 carries N-linked (GlcNAc...) asparagine glycosylation. I-EGF domains are found at residues 456 to 491 (CQRE…PRCE), 492 to 538 (CGED…PYCQ), 539 to 575 (CDNF…EYCN), and 576 to 615 (CTTS…PTCE). 2 N-linked (GlcNAc...) asparagine glycosylation sites follow: asparagine 463 and asparagine 471. An N-linked (GlcNAc...) asparagine glycan is attached at asparagine 541. The N-linked (GlcNAc...) asparagine glycan is linked to asparagine 575. 9 disulfides stabilise this stretch: cysteine 576–cysteine 599, cysteine 583–cysteine 597, cysteine 591–cysteine 602, cysteine 604–cysteine 614, cysteine 617–cysteine 620, cysteine 624–cysteine 669, cysteine 630–cysteine 649, cysteine 633–cysteine 645, and cysteine 677–cysteine 701. The N-linked (GlcNAc...) asparagine glycan is linked to asparagine 695. The chain crosses the membrane as a helical span at residues 709–729 (MIMLGVSLAILLIGVVLLCIW). Positions 730-757 (KLLVSFHDRKEVAKFEAERSKAKWQTGT) are interaction with HAX1. The Cytoplasmic portion of the chain corresponds to 730 to 787 (KLLVSFHDRKEVAKFEAERSKAKWQTGTNPLYRGSTSTFKNVTYKHREKHKVGLSSDG).

It belongs to the integrin beta chain family. In terms of assembly, heterodimer of an alpha and a beta subunit. Interacts with FLNB. Interacts with HAX1. ITGAV:ITGB6 interacts with FBN1. ITGAV:ITGB6 interacts with TGFB1.

It is found in the cell membrane. The protein localises to the cell junction. It localises to the focal adhesion. Its function is as follows. Integrin alpha-V:beta-6 (ITGAV:ITGB6) is a receptor for fibronectin and cytotactin. It recognizes the sequence R-G-D in its ligands. ITGAV:ITGB6 acts as a receptor for fibrillin-1 (FBN1) and mediates R-G-D-dependent cell adhesion to FBN1. Integrin alpha-V:beta-6 (ITGAV:ITGB6) mediates R-G-D-dependent release of transforming growth factor beta-1 (TGF-beta-1) from regulatory Latency-associated peptide (LAP), thereby playing a key role in TGF-beta-1 activation. The chain is Integrin beta-6 (Itgb6) from Rattus norvegicus (Rat).